Here is a 343-residue protein sequence, read N- to C-terminus: Ribonucleoside-diphosphate reductase small subunit (343 aa).

3 residues coordinate Fe cation: Asp101, Glu131, and His134. Tyr138 is a catalytic residue. The chain crosses the membrane as a helical span at residues 188 to 208; sequence ILMILIEGIFFSASFAAIAYL. Residues Glu194, Glu228, and His231 each contribute to the Fe cation site.

The protein belongs to the ribonucleoside diphosphate reductase small chain family. Heterotetramer composed of a homodimer of the large subunit (R1) and a homodimer of the small subunit (R2). Larger multisubunit protein complex are also active, composed of (R1)n(R2)n. The cofactor is Fe cation.

Its subcellular location is the host membrane. It carries out the reaction a 2'-deoxyribonucleoside 5'-diphosphate + [thioredoxin]-disulfide + H2O = a ribonucleoside 5'-diphosphate + [thioredoxin]-dithiol. In terms of biological role, ribonucleoside-diphosphate reductase holoenzyme provides the precursors necessary for viral DNA synthesis. Allows virus growth in non-dividing cells, as well as reactivation from latency in infected hosts. Catalyzes the biosynthesis of deoxyribonucleotides from the corresponding ribonucleotides. This is Ribonucleoside-diphosphate reductase small subunit from Gallid herpesvirus 2 (strain Chicken/Md5/ATCC VR-987) (GaHV-2).